A 348-amino-acid polypeptide reads, in one-letter code: Protein RecA (348 aa).

64 to 71 (GPESSGKT) serves as a coordination point for ATP. Basic and acidic residues predominate over residues 326–335 (EIDGTNKEPL). The tract at residues 326–348 (EIDGTNKEPLDENEETLSLLDDE) is disordered. Residues 336–348 (DENEETLSLLDDE) show a composition bias toward acidic residues.

Belongs to the RecA family.

The protein resides in the cytoplasm. Can catalyze the hydrolysis of ATP in the presence of single-stranded DNA, the ATP-dependent uptake of single-stranded DNA by duplex DNA, and the ATP-dependent hybridization of homologous single-stranded DNAs. It interacts with LexA causing its activation and leading to its autocatalytic cleavage. This Listeria innocua serovar 6a (strain ATCC BAA-680 / CLIP 11262) protein is Protein RecA.